The sequence spans 291 residues: ATP synthase gamma chain (291 aa).

This sequence belongs to the ATPase gamma chain family. F-type ATPases have 2 components, CF(1) - the catalytic core - and CF(0) - the membrane proton channel. CF(1) has five subunits: alpha(3), beta(3), gamma(1), delta(1), epsilon(1). CF(0) has three main subunits: a, b and c.

It localises to the cell inner membrane. Its function is as follows. Produces ATP from ADP in the presence of a proton gradient across the membrane. The gamma chain is believed to be important in regulating ATPase activity and the flow of protons through the CF(0) complex. The chain is ATP synthase gamma chain from Syntrophus aciditrophicus (strain SB).